A 76-amino-acid polypeptide reads, in one-letter code: Small ribosomal subunit protein bS18 (76 aa).

This sequence belongs to the bacterial ribosomal protein bS18 family. In terms of assembly, part of the 30S ribosomal subunit. Forms a tight heterodimer with protein bS6.

In terms of biological role, binds as a heterodimer with protein bS6 to the central domain of the 16S rRNA, where it helps stabilize the platform of the 30S subunit. In Stutzerimonas stutzeri (strain A1501) (Pseudomonas stutzeri), this protein is Small ribosomal subunit protein bS18.